The primary structure comprises 266 residues: GRIP and coiled-coil domain-containing protein C365.11 (266 aa).

Residues 1-13 (METTVSAKNSLEN) show a composition bias toward polar residues. The disordered stretch occupies residues 1–88 (METTVSAKNS…LDEKVKELEN (88 aa)). Serine 10 carries the phosphoserine modification. Residues 36-49 (ASKKKRKNRKKKKN) are compositionally biased toward basic residues. The segment covering 63 to 88 (EEQRSGSIDSKDKEKPLDEKVKELEN) has biased composition (basic and acidic residues). The stretch at 73 to 188 (KDKEKPLDEK…ESVKSHESEL (116 aa)) forms a coiled coil. Residues serine 202 and serine 204 each carry the phosphoserine modification. One can recognise a GRIP domain in the interval 216-264 (ISKELINKEYARNVLLQFLENHEHRDKILPILSTALDLEEVHQHLILKN).

Its subcellular location is the cytoplasm. This is GRIP and coiled-coil domain-containing protein C365.11 from Schizosaccharomyces pombe (strain 972 / ATCC 24843) (Fission yeast).